The chain runs to 429 residues: Neuronal pentraxin-2 (429 aa).

Residues 1 to 14 form the signal peptide; it reads MLALLTVGVALAVA. N-linked (GlcNAc...) asparagine glycosylation is found at N146 and N187. The Pentraxin (PTX) domain occupies 221 to 422; the sequence is DAFKVSLPLR…GASKWPVETC (202 aa). The cysteines at positions 251 and 311 are disulfide-linked. Positions 275, 353, 354, 355, and 365 each coordinate Ca(2+). An N-linked (GlcNAc...) asparagine glycan is attached at N391.

Homooligomer or heterooligomer (probably pentamer) with neuronal pentraxin receptor (NPTXR). Ca(2+) serves as cofactor.

The protein localises to the secreted. Functionally, likely to play role in the modification of cellular properties that underlie long-term plasticity. Binds to agar matrix in a calcium-dependent manner. The polypeptide is Neuronal pentraxin-2 (Nptx2) (Mus musculus (Mouse)).